Reading from the N-terminus, the 952-residue chain is uncharacterized protein (952 aa).

Positions 1-141 (MASLLARHTK…PWIADYLIRR (141 aa)) constitute a CheB-type methylesterase domain. Positions 168–440 (VGQFDGLEPA…SARHRIWQAL (273 aa)) constitute a CheR-type methyltransferase domain. Residues 923–935 (HNQTEASPETSSG) show a composition bias toward polar residues. A disordered region spans residues 923–952 (HNQTEASPETSSGGLPGSDGTGADGGAPRA). Residues 936-952 (GLPGSDGTGADGGAPRA) show a composition bias toward gly residues.

This is an uncharacterized protein from Rhodobacter capsulatus (Rhodopseudomonas capsulata).